The chain runs to 2193 residues: MGSQVSTQRSGSHENSNSATEGSTINYTTINYYKDSYAATAGKQSLKQDPDKFANPVKDIFTEMAAPLKSPSAEACGYSDRVAQLTIGNSTITTQEAANIIVGYGEWPSYCSDNDATAVDKPTRPDVSVNRFYTLDTKLWEKSSKGWYWKFPDVLTETGVFGPNAQFHYLYRSGFCIHVQCNASKFHQGALLVAVLPEYVIGTVAGGTGTENSHPPYKQTQPGADGFELQHPYVLDAGIPISQLTVCPHQWINLRTNNCATIIVPYMNTLPFDSALNHCNFGLLVVPISPLDFDQGATPVIPITITLAPMCSEFAGLRQAVTQGFPTELKPGTNQFLTTDDGVSAPILPNFHPTPCIHIPGEVRNLLELCQVETILEVNNVPTNATSLMERLRFPVSAQAGKGELCAVFRADPGRDGPWQSTMLGQLCGYYTQWSGSLEVTFMFTGSFMATGKMLIAYTPPGGPLPKDRATAMLGTHVIWDFGLQSSVTLVIPWISNTHYRAHARDGVFDYYTTGLVSIWYQTNYVVPIGAPNTAYIIALAAAQKNFTMKLCKDTSDILETATIQGDRVADVIESSIGDSVSKALTPALPAPTGPDTQVSSHRLDTGKVPALQAAEIGASSNASDESMIETRCVLNSHSTAETTLDSFFSRAGLVGEIDLPLKGTTNPNGYANWDIDITGYAQMRRKVELFTYMRFDAEFTFVACTPTGRVVPQLLQYMFVPPGAPKPDSRDSLAWPTATNPSVFVKSSDPPAQVSVPFMSPASAYQWFYDGYPTFGEHKQEKDLEYGACPNNMMGTFSVRTVGSSKSEYSLVIRIYMRMKHVRAWIPRPMRNQNYLFKSNPNYAGDSIKPTGTSRTAITTLGKFGQQSGAIYVGNFRVVNRHLATHTDWANLVWEDSSRDLLVSSTTAQGCDTIARCNCQTGVYYCNSRRKHYPVSFSKPSLVFVEASEYYPARYQSHLMLAEGHSEPGDCGGILRCQHGVVGIVSTGGSGLVGFADVRDLLWLDEEAMEQGVSDYIKGLGRAFGTGFTDAVSREVEALKNHLIGSEGAVEKILKNLVKLISALVIVIRSDYDMVTLTATLALIGCHGSPWAWIKSKTASILGIPMAQKQSASWLKKFNDMANAAKGLEWIFNKISKFIDWLKEKIIPAAKEKVEFLNNLKQLPLLENQVSNLEQSAASQEDLEAMFGNVIYLAHFCRKFQPLYATEAKRVYALEKRMNNYMQFKSKHRIEPVCLIIRGSPGTGKSLATGIIARAIADKYRSSVYSLPPDPDHFDGYKQQVVAVMDDLCQNPDGKDMSLFCQMVSTVDFVPPMASLEEKGVSFTSKFVIASTNASNIIVPTVSDSDAIRRRFYMDCDIEVTDSYKTDLGRLDAGRAAKLCTENNTANFKRCSPLVCGKAIQLRDRKSKVRYSVDTVVSELIREYNNRSAIGNTIEALFQGPPKFRPIRISLEEKPAPDAISDLLASVDSEEVRQYCREQGWIIPETPTNVERHLNRAVLVMQSIATVVAVVSLVYVIYKLFAGFQGAYSGAPKPILKKPVLRTATVQGPSLDFALSLLRRNIRQAQTDQGHFTMLGVRDRLAILPRHSQPGKTIWVEHKLINVLDAVELVDEQGVNLELTLVTLDTNEKFRDITKCIPEVITGASDATLVINTEHIPSMFVPVGDVVQYGFLNLSGKPTHRTMMYNFPTKPGQCGGVVTSVGKIIGIHIGGNGRQAFCAGLKRSYFASEQGEIQWMKPNRETGRLNINGPTRTKLEPSVFHDVFEGNKEPAVLTSKDPRLEVDFEQALFSKYVGNTLHEPDEYVTQAALHYANQLKQLDINTSKMSMEEACYGTEYLEAIDLHTSAGYPYSALGIKKRDILDPVTRDTSRMKLYMDKYGLDLPNSTYVKDELSSLDKIRKGESRLIEASSLNDPVYPRLTFGHLYEVFHANPGTVTGSAVGCNPDVFWSKLPILLPGSLFAFDYSGYDASLSPVWFRALELVLREIGYSEEAVSLIEGINHTHHVYRNKTYCVLGGMPSGCSGTSIFNSMINNIIIRTLLIKTFKGIDLDELKMVAYGDDVLASYPFPIDCLEWGKTGKEYGLTMTPADKSPCFNEVTWENATFLKRGFLPDHQFPFLIHPTMPMREIHESIRWTKDARNTQDHVRSLCLLAWHNGKEEYEKFVSTIRSVPIGRALAIPNLENLRRNWLELF.

The interval 1-22 (MGSQVSTQRSGSHENSNSATEG) is disordered. Gly2 carries N-myristoyl glycine; by host lipidation. The Cytoplasmic segment spans residues 2–1503 (GSQVSTQRSG…HLNRAVLVMQ (1502 aa)). Amphipathic alpha-helix stretches follow at residues 566-588 (GDRV…LTPA) and 568-588 (RVAD…LTPA). Active-site for protease 2A activity residues include His883 and Asp901. Zn(2+)-binding residues include Cys918 and Cys920. The active-site For protease 2A activity is Cys972. The Zn(2+) site is built by Cys978 and His980. Residues 1112–1184 (SASWLKKFND…EQSAASQEDL (73 aa)) form a membrane-binding region. Residues 1112-1250 (SASWLKKFND…SPGTGKSLAT (139 aa)) are oligomerization. The interval 1133-1137 (FNKIS) is RNA-binding. Residues 1216–1374 (EKRMNNYMQF…YKTDLGRLDA (159 aa)) enclose the SF3 helicase domain. 1240-1247 (GSPGTGKS) contacts ATP. Zn(2+) is bound by residues Cys1381, Cys1392, and Cys1397. The C4-type; degenerate zinc-finger motif lies at 1381–1397 (CTENNTANFKRCSPLVC). The segment at 1424–1431 (EYNNRSAI) is RNA-binding. Residues 1435–1440 (IEALFQ) are oligomerization. The stretch at 1504-1519 (SIATVVAVVSLVYVIY) is an intramembrane region. Residues 1520–2193 (KLFAGFQGAY…NLRRNWLELF (674 aa)) are Cytoplasmic-facing. At Tyr1529 the chain carries O-(5'-phospho-RNA)-tyrosine. The Peptidase C3 domain occupies 1549–1727 (GPSLDFALSL…FCAGLKRSYF (179 aa)). Catalysis depends on for protease 3C activity residues His1588, Glu1619, and Cys1695. Residues 1958 to 2073 (GSLFAFDYSG…ASYPFPIDCL (116 aa)) form the RdRp catalytic domain. The Mg(2+) site is built by Asp1964 and Asp2060.

This sequence belongs to the picornaviruses polyprotein family. As to quaternary structure, interacts with capsid protein VP1 and capsid protein VP3 to form heterotrimeric protomers. In terms of assembly, interacts with capsid protein VP0, and capsid protein VP3 to form heterotrimeric protomers. Five protomers subsequently associate to form pentamers which serve as building blocks for the capsid. Interacts with capsid protein VP2, capsid protein VP3 and capsid protein VP4 following cleavage of capsid protein VP0. Interacts with host SCARB2. Interacts with host ARF6; this interaction mediates viral endocytosis. Interacts with capsid protein VP1 and capsid protein VP3 in the mature capsid. Interacts with host SCARB2. As to quaternary structure, interacts with capsid protein VP0 and capsid protein VP1 to form heterotrimeric protomers. Five protomers subsequently associate to form pentamers which serve as building blocks for the capsid. Interacts with capsid protein VP4 in the mature capsid. Interacts with protein 2C; this interaction may be important for virion morphogenesis. In terms of assembly, interacts with capsid protein VP1 and capsid protein VP3. Homodimer. Interacts with host SPOP; this interaction promotes protease 2A ubiquitination and subsequent degradation. As to quaternary structure, interacts with host BAX; this interaction activates the mitochondrial apoptotic pathway. Interacts with host ILF2. In terms of assembly, homohexamer; forms a hexameric ring structure with 6-fold symmetry characteristic of AAA+ ATPases. Interacts (via N-terminus) with host RTN3 (via reticulon domain); this interaction is important for viral replication. Interacts with capsid protein VP3; this interaction may be important for virion morphogenesis. Interacts with protein 3CD. As to quaternary structure, homodimer. Interacts with host GBF1. Interacts (via GOLD domain) with host ACBD3 (via GOLD domain); this interaction allows the formation of a viral protein 3A/ACBD3 heterotetramer with a 2:2 stoichiometry, which will stimulate the recruitment of host PI4KB in order to synthesize PI4P at the viral RNA replication sites. In terms of assembly, interacts with RNA-directed RNA polymerase. Interacts with host IFIH1/MDA5; this interaction inhibits host IFIH1. Interacts with host RIGI. As to quaternary structure, interacts with protein 3AB and with RNA-directed RNA polymerase. Interacts with host PPP1R15A. In terms of assembly, interacts with Viral protein genome-linked and with protein 3CD. Interacts with host NLRP3. Mg(2+) is required as a cofactor. In terms of processing, specific enzymatic cleavages in vivo by the viral proteases yield processing intermediates and the mature proteins. Post-translationally, myristoylation is required for the formation of pentamers during virus assembly. Further assembly of 12 pentamers and a molecule of genomic RNA generates the provirion. During virion maturation, immature virions are rendered infectious following cleavage of VP0 into VP4 and VP2. This maturation seems to be an autocatalytic event triggered by the presence of RNA in the capsid and it is followed by a conformational change infectious virion. In terms of processing, myristoylation is required during RNA encapsidation and formation of the mature virus particle. Post-translationally, VPg is uridylylated by the polymerase into VPg-pUpU. This acts as a nucleotide-peptide primer for the genomic RNA replication.

It localises to the virion. The protein localises to the host cytoplasm. The protein resides in the host cytoplasmic vesicle membrane. Its subcellular location is the host nucleus. The enzyme catalyses a ribonucleoside 5'-triphosphate + H2O = a ribonucleoside 5'-diphosphate + phosphate + H(+). It carries out the reaction Selective cleavage of Tyr-|-Gly bond in the picornavirus polyprotein.. It catalyses the reaction RNA(n) + a ribonucleoside 5'-triphosphate = RNA(n+1) + diphosphate. The catalysed reaction is Selective cleavage of Gln-|-Gly bond in the poliovirus polyprotein. In other picornavirus reactions Glu may be substituted for Gln, and Ser or Thr for Gly.. With respect to regulation, replication or transcription is subject to high level of random mutations by the nucleotide analog ribavirin. Its function is as follows. Forms an icosahedral capsid of pseudo T=3 symmetry with capsid proteins VP2 and VP3. The capsid is 300 Angstroms in diameter, composed of 60 copies of each capsid protein and enclosing the viral positive strand RNA genome. Capsid protein VP1 mainly forms the vertices of the capsid. Capsid protein VP1, together with VP2, interacts with host cell receptor SCARB2 to provide virion attachment to target host cells. This attachment induces virion internalization predominantly through clathrin-dependent endocytosis. After binding to its receptor, the capsid undergoes conformational changes. Capsid protein VP1 N-terminus (that contains an amphipathic alpha-helix) and capsid protein VP4 are externalized. Together, they shape a pore in the host membrane through which viral genome is translocated to host cell cytoplasm. In terms of biological role, forms an icosahedral capsid of pseudo T=3 symmetry with capsid proteins VP2 and VP3. The capsid is 300 Angstroms in diameter, composed of 60 copies of each capsid protein and enclosing the viral positive strand RNA genome. Capsid protein VP2, together with VP1, interacts with host cell receptor SCARB2 to provide virion attachment to target host cells. Functionally, forms an icosahedral capsid of pseudo T=3 symmetry with capsid proteins VP2 and VP3. The capsid is 300 Angstroms in diameter, composed of 60 copies of each capsid protein and enclosing the viral positive strand RNA genome. Lies on the inner surface of the capsid shell. After binding to the host receptor, the capsid undergoes conformational changes. Capsid protein VP4 is released, Capsid protein VP1 N-terminus is externalized, and together, they shape a pore in the host membrane through which the viral genome is translocated into the host cell cytoplasm. Its function is as follows. Component of immature procapsids, which is cleaved into capsid proteins VP4 and VP2 after maturation. Allows the capsid to remain inactive before the maturation step. In terms of biological role, cysteine protease that cleaves viral polyprotein and specific host proteins. It is responsible for the autocatalytic cleavage between the P1 and P2 regions, which is the first cleavage occurring in the polyprotein. Also cleaves the host translation initiation factor EIF4G1, in order to shut down the capped cellular mRNA translation. Inhibits the host nucleus-cytoplasm protein and RNA trafficking by cleaving host members of the nuclear pores. Counteracts stress granule formation probably by antagonizing its assembly or promoting its dissassembly. Cleaves and inhibits host IFIH1/MDA5, thereby inhibiting the type-I IFN production and the establishment of the antiviral state. Cleaves and inhibits host MAVS, thereby inhibiting the type-I IFN production and the establishment of the antiviral state. Functionally, plays an essential role in the virus replication cycle by acting as a viroporin. Creates a pore in the host endoplasmic reticulum and as a consequence releases Ca2+ in the cytoplasm of infected cell. In turn, high levels of cytoplasmic calcium may trigger membrane trafficking and transport of viral ER-associated proteins to viroplasms, sites of viral genome replication. Also activates the mitochondrial apoptotic pathway by activating host BAX. Induces and associates with structural rearrangements of intracellular membranes. Displays RNA-binding, nucleotide binding and NTPase activities. May play a role in virion morphogenesis and viral RNA encapsidation by interacting with the capsid protein VP3. Its function is as follows. Localizes the viral replication complex to the surface of membranous vesicles. Together with protein 3CD binds the Cis-Active RNA Element (CRE) which is involved in RNA synthesis initiation. Acts as a cofactor to stimulate the activity of 3D polymerase, maybe through a nucleid acid chaperone activity. In terms of biological role, localizes the viral replication complex to the surface of membranous vesicles. It inhibits host cell endoplasmic reticulum-to-Golgi apparatus transport and causes the disassembly of the Golgi complex, possibly through GBF1 interaction. This would result in depletion of MHC, trail receptors and IFN receptors at the host cell surface. Plays an essential role in viral RNA replication by recruiting ACBD3 and PI4KB at the viral replication sites, thereby allowing the formation of the rearranged membranous structures where viral replication takes place. Functionally, acts as a primer for viral RNA replication and remains covalently bound to viral genomic RNA. VPg is uridylylated prior to priming replication into VPg-pUpU. The oriI viral genomic sequence may act as a template for this. The VPg-pUpU is then used as primer on the genomic RNA poly(A) by the RNA-dependent RNA polymerase to replicate the viral genome. During genome replication, the VPg-RNA linkage is removed by the host TDP2, thereby accelerating replication. During the late stage of the replication cycle, host TDP2 is excluded from sites of viral RNA synthesis and encapsidation, allowing for the generation of progeny virions. Involved in the viral replication complex and viral polypeptide maturation. It exhibits protease activity with a specificity and catalytic efficiency that is different from protease 3C. Protein 3CD lacks polymerase activity. Protein 3CD binds to the 5'UTR of the viral genome. Regulates host protein expression by interacting with host PPP1R15A to support viral replication. Its function is as follows. Major viral protease that mediates proteolytic processing of the polyprotein. Cleaves host EIF5B, contributing to host translation shutoff. Also cleaves host PABPC1, contributing to host translation shutoff. Disassembles host cytoplasmic stress granules by cleaving host G3BP1, although this effect is less prononced than the inhibition induced by protease 2A. Cleaves host RIGI and thus contributes to the inhibition of type I interferon production. Cleaves host IRF7 and thus contributes to the inhibition of type I interferon production. Cleaves host HNRNPA1 thereby increasing the translation of apoptosis protease activating factor APAF1, leading to apoptosis of the host cell. Cleaves host NLRP1, triggers host N-glycine-mediated degradation of the autoinhibitory NLRP1 N-terminal fragment. Cleaves and inactivates host GSDMD, preventing GSDMD-mediated pyroptosis. Also promotes apoptosis in infected cell through cleaving of host PINX1, a telomere binding protein in order to facilitate viral release. Impairs host PML-NBs production via PML cleavage and counter its antiviral activities. In terms of biological role, replicates the viral genomic RNA on the surface of intracellular membranes. May form linear arrays of subunits that propagate along a strong head-to-tail interaction called interface-I. Covalently attaches UMP to a tyrosine of VPg, which is used to prime RNA synthesis. The positive stranded RNA genome is first replicated at virus induced membranous vesicles, creating a dsRNA genomic replication form. This dsRNA is then used as template to synthesize positive stranded RNA genomes. ss(+)RNA genomes are either translated, replicated or encapsidated. Facilitates the assembly of NLRP3 inflammasome complex and stimulates the cleavage of host pro-CASP1 and the secretion of IL-1beta. The sequence is that of Genome polyprotein from Human enterovirus 71 (strain USA/BrCr/1970) (EV71).